Consider the following 200-residue polypeptide: Nascent polypeptide-associated complex subunit alpha (200 aa).

Residues 1 to 19 (MADPRIEELPDEETKKPTV) show a composition bias toward basic and acidic residues. Disordered regions lie at residues 1–52 (MADP…SRNE) and 120–165 (QQLA…EDKD). Residues 20-34 (EELDESSDEESDAEA) are compositionally biased toward acidic residues. The NAC-A/B domain maps to 49-114 (SRNEKKARKA…AKIEDLNASA (66 aa)). A compositionally biased stretch (basic and acidic residues) spans 127 to 143 (AEHDHAGHTHDHKHEAA). Positions 144-160 (KEEEEEEDDGEEVDAEG) are enriched in acidic residues. A UBA domain is found at 161-200 (IEDKDIELVMTQANVSRKKAIKALKENDNDIVNSIMALSV).

This sequence belongs to the NAC-alpha family. As to quaternary structure, part of the nascent polypeptide-associated complex (NAC), consisting of EGD2 and EGD1. NAC associates with ribosomes via EGD1.

The protein resides in the cytoplasm. It is found in the nucleus. Its function is as follows. Component of the nascent polypeptide-associated complex (NAC), a dynamic component of the ribosomal exit tunnel, protecting the emerging polypeptides from interaction with other cytoplasmic proteins to ensure appropriate nascent protein targeting. The NAC complex also promotes mitochondrial protein import by enhancing productive ribosome interactions with the outer mitochondrial membrane and blocks the inappropriate interaction of ribosomes translating non-secretory nascent polypeptides with translocation sites in the membrane of the endoplasmic reticulum. EGD2 may also be involved in transcription regulation. This chain is Nascent polypeptide-associated complex subunit alpha (EGD2), found in Chaetomium globosum (strain ATCC 6205 / CBS 148.51 / DSM 1962 / NBRC 6347 / NRRL 1970) (Soil fungus).